The chain runs to 98 residues: MTHIMFTFSTAFMLGLSGLTFNRTHLLSALLCLEGMMLSLFIALAMWCTQNETMMFSSAPLLLLALSACEAGLGLSLLVATARAHGSDHLQNLNLLQC.

The next 3 helical transmembrane spans lie at 1 to 21, 26 to 46, and 59 to 79; these read MTHI…GLTF, LLSA…ALAM, and APLL…SLLV.

It belongs to the complex I subunit 4L family.

Its subcellular location is the mitochondrion membrane. It carries out the reaction a ubiquinone + NADH + 5 H(+)(in) = a ubiquinol + NAD(+) + 4 H(+)(out). Core subunit of the mitochondrial membrane respiratory chain NADH dehydrogenase (Complex I) which catalyzes electron transfer from NADH through the respiratory chain, using ubiquinone as an electron acceptor. Part of the enzyme membrane arm which is embedded in the lipid bilayer and involved in proton translocation. The polypeptide is NADH-ubiquinone oxidoreductase chain 4L (MT-ND4L) (Polypterus ornatipinnis (Ornate bichir)).